Here is a 204-residue protein sequence, read N- to C-terminus: ADP-ribosylation factor-like protein 15 (204 aa).

GTP contacts are provided by residues 39 to 46, 82 to 86, and 142 to 145; these read GLTGSGKT, ELGGA, and NHQD.

The protein belongs to the small GTPase superfamily. Arf family.

The chain is ADP-ribosylation factor-like protein 15 (ARL15) from Homo sapiens (Human).